A 258-amino-acid chain; its full sequence is ADP-ribose glycohydrolase MACROD1 (258 aa).

3 positions are modified to N6-succinyllysine: Lys-29, Lys-36, and Lys-62. Lys-71 participates in a covalent cross-link: Glycyl lysine isopeptide (Lys-Gly) (interchain with G-Cter in SUMO2). Residues 74–255 (NPKYKKDKQL…IYQERLPHYF (182 aa)) form the Macro domain. Residue 92–94 (GDI) participates in substrate binding. Lys-96 is modified (N6-acetyllysine). Residues 105–107 (AAN), 112–117 (GGGGVD), 200–206 (ISTGVFG), and Phe-239 each bind substrate.

This sequence belongs to the MacroD-type family. MacroD1/2-like subfamily. Interacts with ESR1; Interacts in a manner that is estrogen independent but is enhanced by estrogen. Interacts (via macro domain) with AR.

It localises to the nucleus. The enzyme catalyses 3''-O-acetyl-ADP-D-ribose + H2O = ADP-D-ribose + acetate + H(+). The catalysed reaction is 2''-O-acetyl-ADP-D-ribose + H2O = ADP-D-ribose + acetate + H(+). It carries out the reaction 4-O-(ADP-D-ribosyl)-L-aspartyl-[protein] + H2O = L-aspartyl-[protein] + ADP-D-ribose + H(+). It catalyses the reaction 5-O-(ADP-D-ribosyl)-L-glutamyl-[protein] + H2O = L-glutamyl-[protein] + ADP-D-ribose + H(+). The enzyme catalyses alpha-NAD(+) + H2O = ADP-D-ribose + nicotinamide + H(+). With respect to regulation, subject to competitive inhibition by the product ADP-ribose. Removes ADP-ribose from aspartate and glutamate residues in proteins bearing a single ADP-ribose moiety. Inactive towards proteins bearing poly-ADP-ribose. Deacetylates O-acetyl-ADP ribose, a signaling molecule generated by the deacetylation of acetylated lysine residues in histones and other proteins. Plays a role in estrogen signaling. Binds to androgen receptor (AR) and amplifies the transactivation function of AR in response to androgen. May play an important role in carcinogenesis and/or progression of hormone-dependent cancers by feed-forward mechanism that activates ESR1 transactivation. Could be an ESR1 coactivator, providing a positive feedback regulatory loop for ESR1 signal transduction. Could be involved in invasive growth by down-regulating CDH1 in endometrial cancer cells. Enhances ESR1-mediated transcription activity. The polypeptide is ADP-ribose glycohydrolase MACROD1 (Macrod1) (Rattus norvegicus (Rat)).